Reading from the N-terminus, the 318-residue chain is tRNA-cytidine(32) 2-sulfurtransferase (318 aa).

A disordered region spans residues 1–29; the sequence is MNHVSSTKPDTAPSKHLTSSHIDATDQNN. A compositionally biased stretch (polar residues) spans 16-27; that stretch reads HLTSSHIDATDQ. Residues 64 to 69 carry the PP-loop motif motif; that stretch reads SGGKDS. 3 residues coordinate [4Fe-4S] cluster: cysteine 139, cysteine 142, and cysteine 230.

Belongs to the TtcA family. Homodimer. The cofactor is Mg(2+). [4Fe-4S] cluster is required as a cofactor.

The protein localises to the cytoplasm. The catalysed reaction is cytidine(32) in tRNA + S-sulfanyl-L-cysteinyl-[cysteine desulfurase] + AH2 + ATP = 2-thiocytidine(32) in tRNA + L-cysteinyl-[cysteine desulfurase] + A + AMP + diphosphate + H(+). It participates in tRNA modification. Catalyzes the ATP-dependent 2-thiolation of cytidine in position 32 of tRNA, to form 2-thiocytidine (s(2)C32). The sulfur atoms are provided by the cysteine/cysteine desulfurase (IscS) system. The polypeptide is tRNA-cytidine(32) 2-sulfurtransferase (Pseudoalteromonas atlantica (strain T6c / ATCC BAA-1087)).